Consider the following 478-residue polypeptide: Ribosomal RNA small subunit methyltransferase F (478 aa).

Residues 123 to 129, Glu147, Asp174, and Asp192 contribute to the S-adenosyl-L-methionine site; that span reads AAAPGSK. The active-site Nucleophile is Cys245.

This sequence belongs to the class I-like SAM-binding methyltransferase superfamily. RsmB/NOP family.

The protein resides in the cytoplasm. The enzyme catalyses cytidine(1407) in 16S rRNA + S-adenosyl-L-methionine = 5-methylcytidine(1407) in 16S rRNA + S-adenosyl-L-homocysteine + H(+). Specifically methylates the cytosine at position 1407 (m5C1407) of 16S rRNA. This Vibrio campbellii (strain ATCC BAA-1116) protein is Ribosomal RNA small subunit methyltransferase F.